A 173-amino-acid chain; its full sequence is RNA pyrophosphohydrolase (173 aa).

The Nudix hydrolase domain occupies P11–S164. Positions G52–G73 match the Nudix box motif.

Belongs to the Nudix hydrolase family. RppH subfamily. A divalent metal cation serves as cofactor.

In terms of biological role, accelerates the degradation of transcripts by removing pyrophosphate from the 5'-end of triphosphorylated RNA, leading to a more labile monophosphorylated state that can stimulate subsequent ribonuclease cleavage. The protein is RNA pyrophosphohydrolase of Bartonella quintana (strain Toulouse) (Rochalimaea quintana).